Consider the following 379-residue polypeptide: All-trans-retinol dehydrogenase [NAD(+)] ADH4 (379 aa).

Residue T1 is modified to N-acetylthreonine. Residues C46, H68, C98, C101, C104, C112, and C179 each contribute to the Zn(2+) site. NAD(+)-binding positions include G204–G209, D228, K233, V297–V299, and R374.

The protein belongs to the zinc-containing alcohol dehydrogenase family. Class-II subfamily. Homodimer. Zn(2+) is required as a cofactor.

The protein resides in the cytoplasm. It catalyses the reaction all-trans-retinol + NAD(+) = all-trans-retinal + NADH + H(+). The catalysed reaction is 9-cis-retinol + NAD(+) = 9-cis-retinal + NADH + H(+). It carries out the reaction 20-oxo-(5Z,8Z,11Z,14Z)-eicosatetraenoate + NAD(+) + H2O = (5Z,8Z,11Z,14Z)-eicosatetraenedioate + NADH + 2 H(+). The enzyme catalyses 20-hydroxy-(5Z,8Z,11Z,14Z)-eicosatetraenoate + NAD(+) = 20-oxo-(5Z,8Z,11Z,14Z)-eicosatetraenoate + NADH + H(+). It catalyses the reaction 1,4-benzoquinone + NADH + H(+) = hydroquinone + NAD(+). Its activity is regulated as follows. Oxidation of 20-HETE is inhibited by low concentrations of N-heptylformamide. Oxidation of 20-HETE is a decreased by 55-65% by either all-trans-retinol or all-trans-retinoic acid. Strongly inhibited by omega-hydroxy fatty acids. Functionally, catalyzes the NAD-dependent oxidation of either all-trans-retinol or 9-cis-retinol. Also oxidizes long chain omega-hydroxy fatty acids, such as 20-HETE, producing both the intermediate aldehyde, 20-oxoarachidonate and the end product, a dicarboxylic acid, (5Z,8Z,11Z,14Z)-eicosatetraenedioate. Also catalyzes the reduction of benzoquinones. The polypeptide is All-trans-retinol dehydrogenase [NAD(+)] ADH4 (Struthio camelus (Common ostrich)).